We begin with the raw amino-acid sequence, 443 residues long: uncharacterized protein (443 aa).

This is an uncharacterized protein from Mycoplasma genitalium (strain ATCC 33530 / DSM 19775 / NCTC 10195 / G37) (Mycoplasmoides genitalium).